We begin with the raw amino-acid sequence, 620 residues long: Glutathione-regulated potassium-efflux system protein KefC (620 aa).

12 helical membrane passes run 4–24 (HTLI…PIAV), 26–46 (LGLG…PWGL), 54–74 (SILH…GLEL), 90–110 (GALQ…LLGL), 114–134 (VAEL…MQAM), 149–169 (FAVL…IPLL), 178–198 (MGAF…VVLL), 218–238 (VFSA…EEVG), 270–290 (GLLL…GTLL), 294–314 (LRIV…LWLI), 327–347 (WFAV…GTAQ), and 359–379 (SLTL…VILN). Residues 399 to 518 (QPRVIIAGFG…AGVEKPERET (120 aa)) form the RCK N-terminal domain. The tract at residues 597–620 (GWQGTEEGKHTGNMADEPETKPSS) is disordered.

It belongs to the monovalent cation:proton antiporter 2 (CPA2) transporter (TC 2.A.37) family. KefC subfamily. In terms of assembly, homodimer. Interacts with the regulatory subunit KefF.

The protein localises to the cell inner membrane. Functionally, pore-forming subunit of a potassium efflux system that confers protection against electrophiles. Catalyzes K(+)/H(+) antiport. This chain is Glutathione-regulated potassium-efflux system protein KefC, found in Shigella sonnei (strain Ss046).